Here is a 453-residue protein sequence, read N- to C-terminus: Glutamyl-tRNA(Gln) amidotransferase subunit A (453 aa).

Catalysis depends on charge relay system residues Lys56 and Ser131. Ser155 acts as the Acyl-ester intermediate in catalysis.

It belongs to the amidase family. GatA subfamily. As to quaternary structure, heterotrimer of A, B and C subunits.

The catalysed reaction is L-glutamyl-tRNA(Gln) + L-glutamine + ATP + H2O = L-glutaminyl-tRNA(Gln) + L-glutamate + ADP + phosphate + H(+). Allows the formation of correctly charged Gln-tRNA(Gln) through the transamidation of misacylated Glu-tRNA(Gln) in organisms which lack glutaminyl-tRNA synthetase. The reaction takes place in the presence of glutamine and ATP through an activated gamma-phospho-Glu-tRNA(Gln). This chain is Glutamyl-tRNA(Gln) amidotransferase subunit A, found in Campylobacter fetus subsp. fetus (strain 82-40).